A 595-amino-acid polypeptide reads, in one-letter code: MTTSSIRRQMKNIVNNYSEAEIKVREATSNDPWGPSSSLMTEIADLTYNVVAFSEIMSMVWKRLNDHGKNWRHVYKALTLLDYLIKTGSERVAQQCRENIFAIQTLKDFQYIDRDGKDQGINVREKSKQLVALLKDEERLKVERVQALKTKERMAQVATGVGSNQITFGRGSSQPNLSTSYSEQEYGKAGGSPASYHGSTSPRVSSELEQARPQTSGEEELQLQLALAMSREVAEQSSESVQTARGSKEERLRRGDDLRLQMALEESRRDTVKVPKKKEAKACCKPGSHSQQTTLLDLMDALPSSGPVTQKTEPWSAGASANQTNPWGGTVAPSNITDPWPSFGTKPAASVDPWGVPTTASTQSVPKNSDPWAASQQPASNAGKTTDAWGAAKPSSASGSFELFSNFNGTVKDDFSEFDNLRTSKKPAESGASVPPQDSRTTSPDLFESQSLTSASSKPSSARKTPESFLGPNAALVNLDSLVTKPAPPAQSLNPFLAPGAAAPAPVNPFQVNQPQPLTLNQLRGSPVLGSSASFGSGPGVETVAPMTSVAPHSSVGASGSSLTPLGPTAMNMVGSVGIPPSAAQSTGTTNPFLL.

The a 1,2-diacyl-sn-glycero-3-phospho-(1D-myo-inositol-4,5-bisphosphate) site is built by R8, K11, R25, N30, R63, and H73. In terms of domain architecture, ENTH spans 12–144 (NIVNNYSEAE…KDEERLKVER (133 aa)). The span at 164 to 183 (NQITFGRGSSQPNLSTSYSE) shows a compositional bias: polar residues. 4 disordered regions span residues 164–254 (NQIT…RLRR), 267–289 (SRRDTVKVPKKKEAKACCKPGSH), 305–396 (SGPV…KPSS), and 423–469 (TSKK…PESF). At R170 the chain carries Omega-N-methylarginine. 3 positions are modified to phosphoserine: S173, S192, and S195. Polar residues-rich tracts occupy residues 197–216 (HGSTSPRVSSELEQARPQTS) and 235–245 (EQSSESVQTAR). 2 UIM domains span residues 218–237 (EEELQLQLALAMSREVAEQS) and 255–274 (GDDLRLQMALEESRRDTVKV). Polar residues predominate over residues 306 to 337 (GPVTQKTEPWSAGASANQTNPWGGTVAPSNIT). 4 repeat units span residues 313 to 315 (EPW), 325 to 327 (NPW), 338 to 340 (DPW), and 352 to 354 (DPW). The interval 313-389 (EPWSAGASAN…SNAGKTTDAW (77 aa)) is 6 X 3 AA repeats of [DE]-P-W. Over residues 358–367 (TTASTQSVPK) the composition is skewed to polar residues. The stretch at 370 to 372 (DPW) is repeat 5. A compositionally biased stretch (polar residues) spans 374-384 (ASQQPASNAGK). The stretch at 387–389 (DAW) is repeat 6. A Phosphoserine modification is found at S443. The segment covering 449–460 (SQSLTSASSKPS) has biased composition (low complexity). The residue at position 465 (T465) is a Phosphothreonine. 2 consecutive repeat copies span residues 494–496 (NPF) and 508–510 (NPF). Residues 494–593 (NPFLAPGAAA…AQSTGTTNPF (100 aa)) are 3 X 3 AA repeats of N-P-F. S526 carries the post-translational modification Phosphoserine. Residues 591–593 (NPF) form repeat 3.

It belongs to the epsin family. In terms of assembly, binds EPS15, AP-2 and clathrin. Interacts with UBQLN2. Interacts with ITSN1. In terms of processing, ubiquitinated.

It is found in the cytoplasm. Plays a role in the formation of clathrin-coated invaginations and endocytosis. The sequence is that of Epsin-2 (Epn2) from Mus musculus (Mouse).